The following is a 348-amino-acid chain: AT-hook motif nuclear-localized protein 9 (348 aa).

Residues 18–156 (HRGLSGSGPP…MASVGELMPS (139 aa)) form a disordered region. Polar residues predominate over residues 31–46 (GSPQQQQGLRHLPNQN). A compositionally biased stretch (low complexity) spans 47-60 (SPFGSGSTGFGSPS). The short motif at 98 to 106 (KRKRGRPRK) is the Bipartite nuclear localization signal element. The a.T hook 1 DNA-binding region spans 98–110 (KRKRGRPRKYGQD). Positions 112 to 131 (SVSLALSSSSVSTITPNNSN) are enriched in low complexity. A DNA-binding region (a.T hook 2) is located at residues 132-144 (KRGRGRPPGSGKK). Residues 157 to 299 (SSGMSFTPHV…EEEASEVVQE (143 aa)) form the PPC domain.

It localises to the nucleus. Transcription factor that specifically binds AT-rich DNA sequences related to the nuclear matrix attachment regions (MARs). In Arabidopsis thaliana (Mouse-ear cress), this protein is AT-hook motif nuclear-localized protein 9.